Here is a 1235-residue protein sequence, read N- to C-terminus: DNA polymerase catalytic subunit (1235 aa).

Disordered regions lie at residues 640-692 (QGRF…TAGR) and 1098-1134 (ATAPGDEPAPPAALPCPAKRPRETPSHADPPGGASKP). The segment covering 650-661 (APKRPAAAREDE) has biased composition (basic and acidic residues). Positions 662 to 675 (ERPEEEGEDEDERE) are enriched in acidic residues. The segment covering 676 to 691 (EGGGEREPEGARETAG) has biased composition (basic and acidic residues).

This sequence belongs to the DNA polymerase type-B family. In terms of assembly, forms a complex with the ssDNA-binding protein UL29, the DNA polymerase processivity factor, and the alkaline exonuclease. Interacts with the putative helicase-primase complex subunit UL8; this interaction may coordinate leading and lagging strand DNA synthesis at the replication fork.

The protein resides in the host nucleus. It catalyses the reaction DNA(n) + a 2'-deoxyribonucleoside 5'-triphosphate = DNA(n+1) + diphosphate. The catalysed reaction is Endonucleolytic cleavage to 5'-phosphomonoester.. Its function is as follows. Replicates viral genomic DNA. The replication complex is composed of six viral proteins: the DNA polymerase, processivity factor, primase, primase-associated factor, helicase, and ssDNA-binding protein. Additionally, the polymerase contains an intrinsic ribonuclease H (RNase H) activity that specifically degrades RNA/DNA heteroduplexes or duplex DNA substrates in the 5' to 3' direction. Therefore, it can catalyze the excision of the RNA primers that initiate the synthesis of Okazaki fragments at a replication fork during viral DNA replication. The protein is DNA polymerase catalytic subunit of Human herpesvirus 1 (strain Angelotti) (HHV-1).